The chain runs to 439 residues: Ornithine aminotransferase, mitochondrial (439 aa).

Residues 1–25 constitute a mitochondrion transit peptide; sequence MLSKLARLQTVAGLGLGVHSSVASA. N6-acetyllysine is present on residues lysine 49 and lysine 66. Lysine 102 is modified (N6-succinyllysine). At lysine 107 the chain carries N6-acetyllysine; alternate. At lysine 107 the chain carries N6-succinyllysine; alternate. Lysine 292 is subject to N6-(pyridoxal phosphate)lysine. N6-acetyllysine; alternate is present on lysine 362. At lysine 362 the chain carries N6-succinyllysine; alternate. Residues lysine 386 and lysine 392 each carry the N6-acetyllysine modification. Residue lysine 405 is modified to N6-acetyllysine; alternate. At lysine 405 the chain carries N6-succinyllysine; alternate. Lysine 421 carries the post-translational modification N6-acetyllysine.

The protein belongs to the class-III pyridoxal-phosphate-dependent aminotransferase family. As to quaternary structure, homohexamer. Pyridoxal 5'-phosphate is required as a cofactor.

It localises to the mitochondrion matrix. It catalyses the reaction L-ornithine + 2-oxoglutarate = L-glutamate 5-semialdehyde + L-glutamate. It participates in amino-acid biosynthesis; L-proline biosynthesis; L-glutamate 5-semialdehyde from L-ornithine: step 1/1. Catalyzes the reversible interconversion of L-ornithine and 2-oxoglutarate to L-glutamate semialdehyde and L-glutamate. This Bos taurus (Bovine) protein is Ornithine aminotransferase, mitochondrial (OAT).